Here is a 128-residue protein sequence, read N- to C-terminus: LIM domain-containing protein 2 (128 aa).

At methionine 1 the chain carries N-acetylmethionine. A disordered region spans residues 1–25 (MFQAAGAAQATPSHEAKGSSGNSTV). Residues 39–99 (ETCAACQKTV…KPHFQQLFKS (61 aa)) enclose the LIM zinc-binding domain. 8 residues coordinate Zn(2+): cysteine 41, cysteine 44, histidine 62, cysteine 65, cysteine 68, cysteine 71, cysteine 89, and histidine 92.

As to quaternary structure, interacts with ILK.

The protein resides in the cytoplasm. The protein localises to the nucleus. Acts as an activator of the protein-kinase ILK, thereby regulating cell motility. This is LIM domain-containing protein 2 (Limd2) from Rattus norvegicus (Rat).